The primary structure comprises 398 residues: Phosphoglycerate kinase (398 aa).

Substrate is bound by residues 22–24 (DFN), R38, 61–64 (HLGR), R120, and R153. ATP is bound by residues K206, G297, E328, and 354-357 (GGDT).

It belongs to the phosphoglycerate kinase family. Monomer.

It localises to the cytoplasm. It carries out the reaction (2R)-3-phosphoglycerate + ATP = (2R)-3-phospho-glyceroyl phosphate + ADP. Its pathway is carbohydrate degradation; glycolysis; pyruvate from D-glyceraldehyde 3-phosphate: step 2/5. This Nautilia profundicola (strain ATCC BAA-1463 / DSM 18972 / AmH) protein is Phosphoglycerate kinase.